A 117-amino-acid chain; its full sequence is ORF2 protein (117 aa).

The segment at 43–104 (NLGRPPAPQP…AGDGGDGELA (62 aa)) is disordered. Residues 79–98 (GTGGDAAGGEAGGSRGAGDG) show a composition bias toward gly residues.

The sequence is that of ORF2 protein from Homo sapiens (Human).